We begin with the raw amino-acid sequence, 88 residues long: RNA-binding protein Hfq (88 aa).

A Sm domain is found at 9 to 68 (DPFLNALRRERIPVSIYLVNGIKLQGQIESFDQFVILLKNTVNQMVYKHAISTVVPARAV). A disordered region spans residues 66–88 (RAVSHHSASDRPQGERPQEKTEE). Over residues 72–88 (SASDRPQGERPQEKTEE) the composition is skewed to basic and acidic residues.

It belongs to the Hfq family. Homohexamer.

Functionally, RNA chaperone that binds small regulatory RNA (sRNAs) and mRNAs to facilitate mRNA translational regulation in response to envelope stress, environmental stress and changes in metabolite concentrations. Also binds with high specificity to tRNAs. The sequence is that of RNA-binding protein Hfq from Aliivibrio fischeri (strain ATCC 700601 / ES114) (Vibrio fischeri).